The following is a 128-amino-acid chain: Claw keratin (128 aa).

Repeat copies occupy residues 83-91 (GGYGGLGGY) and 92-100 (GGYGGLGGY). Positions 83 to 104 (GGYGGLGGYGGYGGLGGYGGYG) are 3 X 9 AA tandem repeats, Gly-rich. Residues 101–109 (GGYGGFGSC) form a 3; approximate repeat.

It belongs to the avian keratin family. As to expression, abundantly expressed in the claw and at a low level in feather tissue.

This chain is Claw keratin (CKER1), found in Gallus gallus (Chicken).